We begin with the raw amino-acid sequence, 238 residues long: Large ribosomal subunit protein uL2 (238 aa).

Positions 201–238 (FGGGGHQHPGRPKTIARGTSPGRTVGHVAARQTGRSRK) are disordered.

The protein belongs to the universal ribosomal protein uL2 family. In terms of assembly, part of the 50S ribosomal subunit. Forms a bridge to the 30S subunit in the 70S ribosome.

Functionally, one of the primary rRNA binding proteins. Required for association of the 30S and 50S subunits to form the 70S ribosome, for tRNA binding and peptide bond formation. It has been suggested to have peptidyltransferase activity; this is somewhat controversial. Makes several contacts with the 16S rRNA in the 70S ribosome. This chain is Large ribosomal subunit protein uL2, found in Methanoregula boonei (strain DSM 21154 / JCM 14090 / 6A8).